The following is a 68-amino-acid chain: C-hordein (68 aa).

Pro residues-rich tracts occupy residues 1-24 and 33-55; these read YPQQ…PQQP and PQQP…PLQP. The tract at residues 1 to 68 is disordered; sequence YPQQPQPFPQ…YTQQTIWSMV (68 aa). Residues 59 to 68 show a composition bias toward polar residues; the sequence is YTQQTIWSMV.

As to expression, developing endosperm.

Sulfur-poor seed storage protein. The chain is C-hordein from Hordeum vulgare (Barley).